The primary structure comprises 302 residues: N-acetylmuramic acid 6-phosphate etherase (302 aa).

One can recognise an SIS domain in the interval 58–221; it reads IGKAFLNGGR…STGAMVKTGK (164 aa). Catalysis depends on E86, which acts as the Proton donor. E117 is a catalytic residue.

It belongs to the GCKR-like family. MurNAc-6-P etherase subfamily. Homodimer.

The catalysed reaction is N-acetyl-D-muramate 6-phosphate + H2O = N-acetyl-D-glucosamine 6-phosphate + (R)-lactate. It functions in the pathway amino-sugar metabolism; N-acetylmuramate degradation. Its function is as follows. Specifically catalyzes the cleavage of the D-lactyl ether substituent of MurNAc 6-phosphate, producing GlcNAc 6-phosphate and D-lactate. In Clostridium botulinum (strain Loch Maree / Type A3), this protein is N-acetylmuramic acid 6-phosphate etherase.